Consider the following 911-residue polypeptide: DNA mismatch repair protein MutS (911 aa).

Residues 1 to 95 (MALQGNLFGD…PWSHHSQVTP (95 aa)) form a disordered region. Positions 23-42 (KRQDEPDQLDDHELTQDAKQ) are enriched in basic and acidic residues. 727–734 (GPNASGKS) is an ATP binding site.

This sequence belongs to the DNA mismatch repair MutS family.

Its function is as follows. This protein is involved in the repair of mismatches in DNA. It is possible that it carries out the mismatch recognition step. This protein has a weak ATPase activity. The chain is DNA mismatch repair protein MutS from Synechococcus sp. (strain CC9311).